The chain runs to 154 residues: uncharacterized protein (154 aa).

This is an uncharacterized protein from Bacillus subtilis (strain 168).